The following is a 179-amino-acid chain: Large ribosomal subunit protein uL5 (179 aa).

The protein belongs to the universal ribosomal protein uL5 family. As to quaternary structure, part of the 50S ribosomal subunit; part of the 5S rRNA/L5/L18/L25 subcomplex. Contacts the 5S rRNA and the P site tRNA. Forms a bridge to the 30S subunit in the 70S ribosome.

This is one of the proteins that bind and probably mediate the attachment of the 5S RNA into the large ribosomal subunit, where it forms part of the central protuberance. In the 70S ribosome it contacts protein S13 of the 30S subunit (bridge B1b), connecting the 2 subunits; this bridge is implicated in subunit movement. Contacts the P site tRNA; the 5S rRNA and some of its associated proteins might help stabilize positioning of ribosome-bound tRNAs. This is Large ribosomal subunit protein uL5 from Edwardsiella ictaluri (strain 93-146).